A 129-amino-acid polypeptide reads, in one-letter code: Small ribosomal subunit protein uS12 (129 aa).

Disordered regions lie at residues 1–25 (MPTY…PALE) and 110–129 (RKQG…VTKK). Over residues 10–20 (FGRKSKTRKTK) the composition is skewed to basic residues.

Belongs to the universal ribosomal protein uS12 family. In terms of assembly, part of the 30S ribosomal subunit. Contacts proteins S8 and S17. May interact with IF1 in the 30S initiation complex.

With S4 and S5 plays an important role in translational accuracy. Its function is as follows. Interacts with and stabilizes bases of the 16S rRNA that are involved in tRNA selection in the A site and with the mRNA backbone. Located at the interface of the 30S and 50S subunits, it traverses the body of the 30S subunit contacting proteins on the other side and probably holding the rRNA structure together. The combined cluster of proteins S8, S12 and S17 appears to hold together the shoulder and platform of the 30S subunit. This Rickettsia conorii (strain ATCC VR-613 / Malish 7) protein is Small ribosomal subunit protein uS12.